Here is an 88-residue protein sequence, read N- to C-terminus: Large ribosomal subunit protein bL31B (88 aa).

Belongs to the bacterial ribosomal protein bL31 family. Type B subfamily. As to quaternary structure, part of the 50S ribosomal subunit.

The sequence is that of Large ribosomal subunit protein bL31B from Pasteurella multocida (strain Pm70).